The primary structure comprises 89 residues: Small ribosomal subunit protein uS15 (89 aa).

Belongs to the universal ribosomal protein uS15 family. In terms of assembly, part of the 30S ribosomal subunit. Forms a bridge to the 50S subunit in the 70S ribosome, contacting the 23S rRNA.

Its function is as follows. One of the primary rRNA binding proteins, it binds directly to 16S rRNA where it helps nucleate assembly of the platform of the 30S subunit by binding and bridging several RNA helices of the 16S rRNA. In terms of biological role, forms an intersubunit bridge (bridge B4) with the 23S rRNA of the 50S subunit in the ribosome. This Parvibaculum lavamentivorans (strain DS-1 / DSM 13023 / NCIMB 13966) protein is Small ribosomal subunit protein uS15.